A 322-amino-acid chain; its full sequence is Tetrahydromethanopterin S-methyltransferase subunit H (322 aa).

This sequence belongs to the MtrH family. In terms of assembly, the complex is composed of 8 subunits; MtrA, MtrB, MtrC, MtrD, MtrE, MtrF, MtrG and MtrH.

It carries out the reaction 5-methyl-5,6,7,8-tetrahydromethanopterin + coenzyme M + 2 Na(+)(in) = 5,6,7,8-tetrahydromethanopterin + methyl-coenzyme M + 2 Na(+)(out). It participates in one-carbon metabolism; methanogenesis from CO(2); methyl-coenzyme M from 5,10-methylene-5,6,7,8-tetrahydromethanopterin: step 2/2. In terms of biological role, part of a complex that catalyzes the formation of methyl-coenzyme M and tetrahydromethanopterin from coenzyme M and methyl-tetrahydromethanopterin. This is an energy-conserving, sodium-ion translocating step. MtrH catalyzes the transfer of the methyl group from methyl-tetrahydromethanopterin to the corrinoid prosthetic group of MtrA. The polypeptide is Tetrahydromethanopterin S-methyltransferase subunit H (Methanopyrus kandleri (strain AV19 / DSM 6324 / JCM 9639 / NBRC 100938)).